The following is a 438-amino-acid chain: MRISIFGLGYVGAVCAGCLTARGHEVIGVDVSSTKIDLINQGKSPIVEPGLEALLQQGIANGRLRGTTDFAEAIRASDVSMICVGTPSKKNGDLGLEYIESVCREIGYVLRDTTRRHTIVVRSTVLPGTVKNVVIPILEDCSGKKAGVDFGVAVNPEFLRESTAIKDYDQPPMTVIGELDSASGDILQALYEELDAPIIRKPIEVAEMIKYTCNVWHATKVTFANEIGNIAKAVGVDGREVMDVVCQDKVLNLSQYYMRPGFAFGGSCLPKDVRALTYRAASLDVRAPLLDSLMRSNESQVQNAFELIEAHDKRKVALLGLSFKAGTDDLRESPLVELAERLIGKGYQLDIYDENVQYARVHGANKDYIESKIPHVSSLLNANLQQVIDNADIIVLGNRDEQFRALALQAPAGKQVIDLVGFMNKPTSTTARTEGICW.

The NAD(+) site is built by Tyr10, Val11, Asp30, Lys35, Thr86, and Thr124. GDP-alpha-D-mannuronate-binding residues include Glu161, Lys210, Asn214, His217, Asn225, Tyr256, Tyr257, Arg259, Phe262, and Gly265. Cys268 is an active-site residue. Lys271 contributes to the NAD(+) binding site. Lys324 contributes to the GDP-alpha-D-mannuronate binding site. Arg331 provides a ligand contact to NAD(+).

This sequence belongs to the UDP-glucose/GDP-mannose dehydrogenase family.

It carries out the reaction GDP-alpha-D-mannose + 2 NAD(+) + H2O = GDP-alpha-D-mannuronate + 2 NADH + 3 H(+). Its pathway is glycan biosynthesis; alginate biosynthesis. In terms of biological role, catalyzes the oxidation of guanosine diphospho-D-mannose (GDP-D-mannose) to GDP-D-mannuronic acid, a precursor for alginate polymerization. The alginate layer causes a mucoid phenotype and provides a protective barrier against host immune defenses and antibiotics. This chain is GDP-mannose 6-dehydrogenase (algD), found in Pseudomonas putida (strain ATCC 47054 / DSM 6125 / CFBP 8728 / NCIMB 11950 / KT2440).